The sequence spans 500 residues: Lysine--tRNA ligase (500 aa).

Residues E411 and E418 each coordinate Mg(2+).

This sequence belongs to the class-II aminoacyl-tRNA synthetase family. Homodimer. Requires Mg(2+) as cofactor.

It localises to the cytoplasm. It catalyses the reaction tRNA(Lys) + L-lysine + ATP = L-lysyl-tRNA(Lys) + AMP + diphosphate. In Azoarcus sp. (strain BH72), this protein is Lysine--tRNA ligase.